The chain runs to 773 residues: Cellobiose dehydrogenase (773 aa).

An N-terminal signal peptide occupies residues 1-18; it reads MLGRSLLALLPFVGLAFS. Gln-19 bears the Pyrrolidone carboxylic acid mark. Residues 19–208 are heme domain; it reads QSASQFTDPT…YQNYLNGDSG (190 aa). Residues Met-83 and His-181 each contribute to the heme site. The tract at residues 203-227 is disordered; that stretch reads LNGDSGNPTTTSTKPTSTSSSVTTG. Low complexity predominate over residues 210 to 227; sequence PTTTSTKPTSTSSSVTTG. An oxidoreductase region spans residues 235 to 773; it reads YDYIIVGAGP…AKILALAGGP (539 aa). 236–265 lines the FAD pocket; that stretch reads DYIIVGAGPGGIIAADRLSEAGKKVLLLER. His-707 functions as the Proton acceptor in the catalytic mechanism.

In the C-terminal section; belongs to the GMC oxidoreductase family. It depends on FAD as a cofactor. Requires heme as cofactor.

It is found in the secreted. It carries out the reaction D-cellobiose + A = D-cellobiono-1,5-lactone + AH2. Its function is as follows. Degrades both lignin and cellulose. Oxidizes cellobiose to cellobionolactone. The protein is Cellobiose dehydrogenase (CDH-1) of Phanerodontia chrysosporium (White-rot fungus).